A 177-amino-acid polypeptide reads, in one-letter code: Protein ParB (177 aa).

Residues 1–26 (MKRRSYAMLRAAAALAVLVVASPAWA) form the signal peptide. A TNase-like domain is found at 27-157 (ELRGEVVRII…RGKRVGLWSD (131 aa)). Residues Arg53, Glu61, and Arg95 contribute to the active site.

In terms of assembly, monomer. It depends on Ca(2+) as a cofactor. Post-translationally, the N-terminus is blocked.

It localises to the secreted. Its activity is regulated as follows. Endonuclease activity is inhibited by EDTA. In terms of biological role, involved in plasmid partition. An endonuclease that acts on supercoiled dsDNA, converting it first to open circular DNA and then linearizing it. Preferentially cleaves regions in dsDNA that are capable of forming ssDNA, such as AT-rich regions and sequences that can form cruciforms. Has poor endonucleolytic activity on linear DNA, has 5'-3' exonuclease activity on dsDNA cleaving generating 3'-phosphonucleotides. In Escherichia coli, this protein is Protein ParB.